A 732-amino-acid chain; its full sequence is Elongation factor 2 (732 aa).

Residues 19 to 230 (ERIRNMGIAA…VSFKDIVELT (212 aa)) enclose the tr-type G domain. GTP-binding positions include 28 to 35 (AHIDHGKT), 94 to 98 (DTPGH), and 148 to 151 (NKVD). Position 597 is a diphthamide (His-597).

It belongs to the TRAFAC class translation factor GTPase superfamily. Classic translation factor GTPase family. EF-G/EF-2 subfamily.

The protein localises to the cytoplasm. Catalyzes the GTP-dependent ribosomal translocation step during translation elongation. During this step, the ribosome changes from the pre-translocational (PRE) to the post-translocational (POST) state as the newly formed A-site-bound peptidyl-tRNA and P-site-bound deacylated tRNA move to the P and E sites, respectively. Catalyzes the coordinated movement of the two tRNA molecules, the mRNA and conformational changes in the ribosome. The chain is Elongation factor 2 from Thermococcus gammatolerans (strain DSM 15229 / JCM 11827 / EJ3).